Here is a 308-residue protein sequence, read N- to C-terminus: Glutamyl-Q tRNA(Asp) synthetase (308 aa).

L-glutamate is bound by residues 19-23 (RFAPS) and E55. The short motif at 22–32 (PSPSGELHFGS) is the 'HIGH' region element. Residues C111, C113, Y125, and C129 each coordinate Zn(2+). Y182 and R200 together coordinate L-glutamate. A 'KMSKS' region motif is present at residues 238 to 242 (KLSKQ). K241 is an ATP binding site.

It belongs to the class-I aminoacyl-tRNA synthetase family. GluQ subfamily. The cofactor is Zn(2+).

Functionally, catalyzes the tRNA-independent activation of glutamate in presence of ATP and the subsequent transfer of glutamate onto a tRNA(Asp). Glutamate is transferred on the 2-amino-5-(4,5-dihydroxy-2-cyclopenten-1-yl) moiety of the queuosine in the wobble position of the QUC anticodon. In Escherichia coli O157:H7, this protein is Glutamyl-Q tRNA(Asp) synthetase.